Reading from the N-terminus, the 471-residue chain is U1 small nuclear ribonucleoprotein 70 kDa (471 aa).

The tract at residues 48–78 is disordered; sequence FEDPRDAPPPTRAETREERMERKRREKIERR. Residues 60–78 are compositionally biased toward basic and acidic residues; sequence AETREERMERKRREKIERR. The interval 92–205 is required for interaction with U1 RNA; sequence HNDQNAQGDA…GGGLGGTRRG (114 aa). Positions 103–184 constitute an RRM domain; sequence KTLFVARVNY…RRVLVDVERG (82 aa). Residues 190–471 are disordered; it reads WRPRRLGGGL…NGYMMEPPME (282 aa). Gly residues predominate over residues 195–204; it reads LGGGLGGTRR. The span at 210-246 shows a compositional bias: basic and acidic residues; that stretch reads NIRHSGRDDTSRYDERDRERERDRRERSREREKEPRE. A compositionally biased stretch (basic residues) spans 247–261; that stretch reads RRRSRSRERRRKSRS. Over residues 262–288 the composition is skewed to basic and acidic residues; that stretch reads REKEERKRTREKSKDKDKEKDKDNKDR. Residues 289 to 298 show a composition bias toward basic residues; that stretch reads DRKRRSRSRE. Basic and acidic residues predominate over residues 299-316; the sequence is RKRERDRDREKKEERVEA. Residues 317-326 show a composition bias toward acidic residues; it reads EVPEADDAPQ. The segment covering 339 to 428 has biased composition (basic and acidic residues); the sequence is IELKQEPEEK…RSEKREERVP (90 aa).

Component of the U1 snRNP. The U1 snRNP is composed of the U1 snRNA and the 7 core Sm proteins snrpb, snrpd1, snrpd2, snrpd3, snrpe, snrpf and snrpg that assemble in a heptameric protein ring on the Sm site of the small nuclear RNA to form the core snRNP, and at least three U1 snRNP-specific proteins snrnp70/U1-70K, snrpa/U1-A and snrpc/U1-C.

Its subcellular location is the nucleus speckle. The protein resides in the nucleus. It is found in the nucleoplasm. Component of the spliceosomal U1 snRNP, which is essential for recognition of the pre-mRNA 5' splice-site and the subsequent assembly of the spliceosome. snrnp70 binds to the loop I region of U1-snRNA. The sequence is that of U1 small nuclear ribonucleoprotein 70 kDa (snrnp70) from Xenopus laevis (African clawed frog).